Here is a 508-residue protein sequence, read N- to C-terminus: Lysine--tRNA ligase (508 aa).

Positions 418 and 425 each coordinate Mg(2+).

This sequence belongs to the class-II aminoacyl-tRNA synthetase family. Homodimer. Mg(2+) serves as cofactor.

The protein resides in the cytoplasm. It catalyses the reaction tRNA(Lys) + L-lysine + ATP = L-lysyl-tRNA(Lys) + AMP + diphosphate. In Burkholderia pseudomallei (strain K96243), this protein is Lysine--tRNA ligase.